We begin with the raw amino-acid sequence, 464 residues long: tRNA(Ile)-lysidine synthase (464 aa).

Residue 26-31 (SGGPDS) participates in ATP binding.

The protein belongs to the tRNA(Ile)-lysidine synthase family.

The protein resides in the cytoplasm. It catalyses the reaction cytidine(34) in tRNA(Ile2) + L-lysine + ATP = lysidine(34) in tRNA(Ile2) + AMP + diphosphate + H(+). Ligates lysine onto the cytidine present at position 34 of the AUA codon-specific tRNA(Ile) that contains the anticodon CAU, in an ATP-dependent manner. Cytidine is converted to lysidine, thus changing the amino acid specificity of the tRNA from methionine to isoleucine. In Geobacillus kaustophilus (strain HTA426), this protein is tRNA(Ile)-lysidine synthase.